We begin with the raw amino-acid sequence, 82 residues long: Turripeptide IX-04 (82 aa).

A signal peptide spans 1–21; that stretch reads MGFYMLLTVALLLTSLMNVEA. Positions 22-39 are excised as a propeptide; the sequence is TPVDQAERSALEKSGLGN. 3 disulfide bridges follow: Cys-48/Cys-70, Cys-55/Cys-74, and Cys-60/Cys-81.

Expressed by the venom duct.

It is found in the secreted. This chain is Turripeptide IX-04, found in Gemmula speciosa (Splendid gem-turris).